A 331-amino-acid chain; its full sequence is Glyceraldehyde-3-phosphate dehydrogenase (331 aa).

Residues 12-13 (RI), Asp-34, Arg-78, and Thr-120 each bind NAD(+). Lys-132 and Lys-138 each carry N6-acetyllysine. D-glyceraldehyde 3-phosphate-binding positions include 149–151 (SCT) and Thr-180. Cys-150 acts as the Nucleophile in catalysis. An N6-acetyllysine modification is found at Lys-192. Residues 209–210 (TG) and Arg-232 each bind D-glyceraldehyde 3-phosphate. Lys-249 is subject to N6-acetyllysine. An NAD(+)-binding site is contributed by Asn-314.

It belongs to the glyceraldehyde-3-phosphate dehydrogenase family. In terms of assembly, homotetramer.

The protein localises to the cytoplasm. It carries out the reaction D-glyceraldehyde 3-phosphate + phosphate + NAD(+) = (2R)-3-phospho-glyceroyl phosphate + NADH + H(+). It participates in carbohydrate degradation; glycolysis; pyruvate from D-glyceraldehyde 3-phosphate: step 1/5. Functionally, catalyzes the oxidative phosphorylation of glyceraldehyde 3-phosphate (G3P) to 1,3-bisphosphoglycerate (BPG) using the cofactor NAD. The first reaction step involves the formation of a hemiacetal intermediate between G3P and a cysteine residue, and this hemiacetal intermediate is then oxidized to a thioester, with concomitant reduction of NAD to NADH. The reduced NADH is then exchanged with the second NAD, and the thioester is attacked by a nucleophilic inorganic phosphate to produce BPG. The protein is Glyceraldehyde-3-phosphate dehydrogenase (gapA) of Escherichia coli O6:H1 (strain CFT073 / ATCC 700928 / UPEC).